Consider the following 186-residue polypeptide: dCTP deaminase (186 aa).

107–112 (KSTYAR) lines the dCTP pocket. E133 functions as the Proton donor/acceptor in the catalytic mechanism. Residues Q152, Y166, and Q176 each contribute to the dCTP site.

Belongs to the dCTP deaminase family. Homotrimer.

It catalyses the reaction dCTP + H2O + H(+) = dUTP + NH4(+). It functions in the pathway pyrimidine metabolism; dUMP biosynthesis; dUMP from dCTP (dUTP route): step 1/2. Functionally, catalyzes the deamination of dCTP to dUTP. The chain is dCTP deaminase from Campylobacter jejuni subsp. jejuni serotype O:6 (strain 81116 / NCTC 11828).